The chain runs to 365 residues: Glycerol dehydrogenase (365 aa).

The NAD(+) site is built by Asp37, Gly94, Lys95, Thr116, and Ser119. Residue Asp121 coordinates glycerol. 3 residues coordinate NAD(+): Ser125, Leu127, and Tyr131. Zn(2+) is bound by residues Asp171, His254, and His271. Residue His254 participates in glycerol binding.

Belongs to the iron-containing alcohol dehydrogenase family. Zn(2+) serves as cofactor.

It carries out the reaction glycerol + NAD(+) = dihydroxyacetone + NADH + H(+). It participates in polyol metabolism; glycerol fermentation; glycerone phosphate from glycerol (oxidative route): step 1/2. Functionally, catalyzes the NAD-dependent oxidation of glycerol to dihydroxyacetone (glycerone). Allows microorganisms to utilize glycerol as a source of carbon under anaerobic conditions. This is Glycerol dehydrogenase (gldA) from Pseudomonas putida (Arthrobacter siderocapsulatus).